Reading from the N-terminus, the 491-residue chain is Cobyric acid synthase (491 aa).

The GATase cobBQ-type domain occupies 250-439 (EVTIAVIRLP…LHGIFDNGAW (190 aa)). Cys331 acts as the Nucleophile in catalysis. His431 is a catalytic residue.

Belongs to the CobB/CobQ family. CobQ subfamily.

The protein operates within cofactor biosynthesis; adenosylcobalamin biosynthesis. Functionally, catalyzes amidations at positions B, D, E, and G on adenosylcobyrinic A,C-diamide. NH(2) groups are provided by glutamine, and one molecule of ATP is hydrogenolyzed for each amidation. The protein is Cobyric acid synthase of Synechococcus elongatus (strain ATCC 33912 / PCC 7942 / FACHB-805) (Anacystis nidulans R2).